The following is a 204-amino-acid chain: Ras-related protein RABG1 (204 aa).

12–19 (GDSGVGKT) serves as a coordination point for GTP. The short motif at 34 to 42 (HNSTIYVDL) is the Effector region element. Residues 60–64 (DTAGQ), 122–125 (NKTD), and 155–156 (SA) each bind GTP. 2 S-geranylgeranyl cysteine lipidation sites follow: Cys202 and Cys204. At Cys204 the chain carries Cysteine methyl ester.

The protein belongs to the small GTPase superfamily. Rab family.

It localises to the cell membrane. Its function is as follows. Intracellular vesicle trafficking and protein transport. The protein is Ras-related protein RABG1 (RABG1) of Arabidopsis thaliana (Mouse-ear cress).